The sequence spans 119 residues: uncharacterized protein (119 aa).

This is an uncharacterized protein from Orgyia pseudotsugata (Douglas-fir tussock moth).